Reading from the N-terminus, the 346-residue chain is RNA polymerase II holoenzyme cyclin-like subunit (346 aa).

Residues 59 to 158 enclose the Cyclin N-terminal domain; it reads NLLIKLGRRL…EMDSYLFLHH (100 aa).

It belongs to the cyclin family. Cyclin C subfamily. Component of the SRB8-11 complex, a regulatory module of the Mediator complex.

The protein resides in the nucleus. Component of the SRB8-11 complex. The SRB8-11 complex is a regulatory module of the Mediator complex which is itself involved in regulation of basal and activated RNA polymerase II-dependent transcription. The SRB8-11 complex may be involved in the transcriptional repression of a subset of genes regulated by Mediator. It may inhibit the association of the Mediator complex with RNA polymerase II to form the holoenzyme complex. The SRB8-11 complex phosphorylates the C-terminal domain (CTD) of the largest subunit of RNA polymerase II. The sequence is that of RNA polymerase II holoenzyme cyclin-like subunit (SSN8) from Scheffersomyces stipitis (strain ATCC 58785 / CBS 6054 / NBRC 10063 / NRRL Y-11545) (Yeast).